The following is a 361-amino-acid chain: 3-dehydroquinate synthase (361 aa).

NAD(+)-binding positions include 73–78 (DAEAGK), 107–111 (GAATD), 131–132 (TT), Lys-144, Lys-153, and 171–174 (TLET). 3 residues coordinate Zn(2+): Glu-186, His-249, and His-265.

This sequence belongs to the sugar phosphate cyclases superfamily. Dehydroquinate synthase family. It depends on NAD(+) as a cofactor. Co(2+) is required as a cofactor. The cofactor is Zn(2+).

The protein resides in the cytoplasm. It carries out the reaction 7-phospho-2-dehydro-3-deoxy-D-arabino-heptonate = 3-dehydroquinate + phosphate. It functions in the pathway metabolic intermediate biosynthesis; chorismate biosynthesis; chorismate from D-erythrose 4-phosphate and phosphoenolpyruvate: step 2/7. Catalyzes the conversion of 3-deoxy-D-arabino-heptulosonate 7-phosphate (DAHP) to dehydroquinate (DHQ). This is 3-dehydroquinate synthase from Mycobacterium leprae (strain TN).